The primary structure comprises 156 residues: ATP synthase subunit b (156 aa).

Residues 7 to 29 (LIGQLIAFALFTWFCVKFVWPPI) traverse the membrane as a helical segment.

It belongs to the ATPase B chain family. As to quaternary structure, F-type ATPases have 2 components, F(1) - the catalytic core - and F(0) - the membrane proton channel. F(1) has five subunits: alpha(3), beta(3), gamma(1), delta(1), epsilon(1). F(0) has three main subunits: a(1), b(2) and c(10-14). The alpha and beta chains form an alternating ring which encloses part of the gamma chain. F(1) is attached to F(0) by a central stalk formed by the gamma and epsilon chains, while a peripheral stalk is formed by the delta and b chains.

The protein resides in the cell inner membrane. Functionally, f(1)F(0) ATP synthase produces ATP from ADP in the presence of a proton or sodium gradient. F-type ATPases consist of two structural domains, F(1) containing the extramembraneous catalytic core and F(0) containing the membrane proton channel, linked together by a central stalk and a peripheral stalk. During catalysis, ATP synthesis in the catalytic domain of F(1) is coupled via a rotary mechanism of the central stalk subunits to proton translocation. Its function is as follows. Component of the F(0) channel, it forms part of the peripheral stalk, linking F(1) to F(0). The chain is ATP synthase subunit b from Mannheimia succiniciproducens (strain KCTC 0769BP / MBEL55E).